The chain runs to 131 residues: MILGIGVDLVSVKRIRSASERTGGRLLVRLFTPAERDCCRARRAAYECYAARFAAKEAVFKALGTGFSGCCWHDVEITNGPGGGPVVALTGSAARVAARRGITGVLLSLSHEGDQAVAFAIAVGPSESQRK.

2 residues coordinate Mg(2+): Asp8 and Glu57.

The protein belongs to the P-Pant transferase superfamily. AcpS family. Mg(2+) is required as a cofactor.

It localises to the cytoplasm. The catalysed reaction is apo-[ACP] + CoA = holo-[ACP] + adenosine 3',5'-bisphosphate + H(+). Functionally, transfers the 4'-phosphopantetheine moiety from coenzyme A to a Ser of acyl-carrier-protein. This Desulforudis audaxviator (strain MP104C) protein is Holo-[acyl-carrier-protein] synthase.